A 151-amino-acid chain; its full sequence is UPF0756 membrane protein Dred_1097 (151 aa).

4 consecutive transmembrane segments (helical) span residues 6–26 (IILL…LATA), 52–72 (VGLI…NIVY), 75–95 (LVMK…TLAT), and 111–131 (LIFG…GIPI).

This sequence belongs to the UPF0756 family.

The protein resides in the cell membrane. In Desulforamulus reducens (strain ATCC BAA-1160 / DSM 100696 / MI-1) (Desulfotomaculum reducens), this protein is UPF0756 membrane protein Dred_1097.